The chain runs to 569 residues: Urease subunit alpha (569 aa).

Residues 132–569 (GGVDTHIHFI…VPLGQRYFLF (438 aa)) enclose the Urease domain. Ni(2+) is bound by residues H137, H139, and K220. K220 carries the N6-carboxylysine modification. H222 contacts substrate. Residues H249 and H275 each contribute to the Ni(2+) site. H323 (proton donor) is an active-site residue. A Ni(2+)-binding site is contributed by D363.

The protein belongs to the metallo-dependent hydrolases superfamily. Urease alpha subunit family. As to quaternary structure, heterotrimer of UreA (gamma), UreB (beta) and UreC (alpha) subunits. Three heterotrimers associate to form the active enzyme. Ni cation serves as cofactor. Post-translationally, carboxylation allows a single lysine to coordinate two nickel ions.

It is found in the cytoplasm. The enzyme catalyses urea + 2 H2O + H(+) = hydrogencarbonate + 2 NH4(+). Its pathway is nitrogen metabolism; urea degradation; CO(2) and NH(3) from urea (urease route): step 1/1. The polypeptide is Urease subunit alpha (Bacillus subtilis (strain 168)).